The sequence spans 200 residues: Ribosome maturation factor RimP (200 aa).

The protein belongs to the RimP family.

Its subcellular location is the cytoplasm. Functionally, required for maturation of 30S ribosomal subunits. The polypeptide is Ribosome maturation factor RimP (Polaromonas sp. (strain JS666 / ATCC BAA-500)).